The sequence spans 388 residues: Chorismate synthase (388 aa).

Residues arginine 39 and arginine 45 each contribute to the NADP(+) site. FMN is bound by residues 130–132 (RSS), 251–252 (NA), glycine 296, 311–315 (KPIPT), and arginine 337.

This sequence belongs to the chorismate synthase family. In terms of assembly, homotetramer. It depends on FMNH2 as a cofactor.

The enzyme catalyses 5-O-(1-carboxyvinyl)-3-phosphoshikimate = chorismate + phosphate. Its pathway is metabolic intermediate biosynthesis; chorismate biosynthesis; chorismate from D-erythrose 4-phosphate and phosphoenolpyruvate: step 7/7. Catalyzes the anti-1,4-elimination of the C-3 phosphate and the C-6 proR hydrogen from 5-enolpyruvylshikimate-3-phosphate (EPSP) to yield chorismate, which is the branch point compound that serves as the starting substrate for the three terminal pathways of aromatic amino acid biosynthesis. This reaction introduces a second double bond into the aromatic ring system. This Streptococcus suis (strain 98HAH33) protein is Chorismate synthase.